Consider the following 976-residue polypeptide: Vacuolar membrane protease (976 aa).

The Cytoplasmic portion of the chain corresponds to 1-15 (MKLKSVFRSVLKYRK). A helical transmembrane segment spans residues 16 to 36 (TNLSLLLLITYSIITLLYIFD). The Vacuolar segment spans residues 37–359 (HERYKLNLPK…KFFVISAKTL (323 aa)). 2 N-linked (GlcNAc...) asparagine glycosylation sites follow: Asn96 and Asn121. His156 and Asp168 together coordinate Zn(2+). Asn189 is a glycosylation site (N-linked (GlcNAc...) asparagine). Glu200 serves as the catalytic Proton acceptor. Residue Glu201 coordinates Zn(2+). N-linked (GlcNAc...) asparagine glycosylation is found at Asn212 and Asn217. Glu226 and His300 together coordinate Zn(2+). Residues 360 to 380 (FYWNCIFLLVSPVVAIGLYLI) form a helical membrane-spanning segment. Residues 381 to 392 (SRDRMTWKSHSW) lie on the Cytoplasmic side of the membrane. The helical transmembrane segment at 393-412 (LSWTRFPLSLAAGIIVQKLF) threads the bilayer. At 413 to 428 (SNDIIRSNPLTFSRNY) the chain is on the vacuolar side. The helical transmembrane segment at 429-449 (FWPISAFFTQVIFTSYVLINC) threads the bilayer. Residues 450 to 461 (SNFFFPCADMKS) lie on the Cytoplasmic side of the membrane. A helical membrane pass occupies residues 462–482 (LSIIELFIILWTILLFTSKLL). The Vacuolar portion of the chain corresponds to 483–496 (YSSDYRYTGLYPLS). A helical membrane pass occupies residues 497–517 (IFFLLSTIAAILRLLALALGM). Residues 518–627 (RTRKRLGREC…NSLKLEYTDY (110 aa)) are Cytoplasmic-facing. The interval 528 to 610 (RDHHSNYSSH…PLLKGSNSME (83 aa)) is disordered. Polar residues predominate over residues 549 to 558 (NLEQPQDQFT). Positions 559-570 (SSQDDQASIQDD) are enriched in low complexity. Residues 582–601 (NVDEDHGMDSSSQQHDERVP) show a composition bias toward basic and acidic residues. Residues 628-648 (AWIIQFLLIVPIPSFILFNSV) form a helical membrane-spanning segment. At 649 to 668 (DVIMDALNHTVQEGSKATFD) the chain is on the vacuolar side. Asn656 carries an N-linked (GlcNAc...) asparagine glycan. Residues 669–689 (VLRFGMVGSILIALPILPFFY) form a helical membrane-spanning segment. Residues 690–692 (KVN) are Cytoplasmic-facing. Residues 693-713 (YITISLTALLFLISASKTLLV) form a helical membrane-spanning segment. Over 714 to 976 (HPFTNSNPLK…LVIVKDAIIL (263 aa)) the chain is Vacuolar. N-linked (GlcNAc...) asparagine glycans are attached at residues Asn768, Asn796, Asn811, Asn866, and Asn937.

It belongs to the peptidase M28 family. Zn(2+) serves as cofactor.

Its subcellular location is the vacuole membrane. Its function is as follows. May be involved in vacuolar sorting and osmoregulation. This is Vacuolar membrane protease from Saccharomyces cerevisiae (strain JAY291) (Baker's yeast).